The chain runs to 179 residues: Large ribosomal subunit protein uL5 (179 aa).

Belongs to the universal ribosomal protein uL5 family. Part of the 50S ribosomal subunit; part of the 5S rRNA/L5/L18/L25 subcomplex. Contacts the 5S rRNA and the P site tRNA. Forms a bridge to the 30S subunit in the 70S ribosome.

This is one of the proteins that bind and probably mediate the attachment of the 5S RNA into the large ribosomal subunit, where it forms part of the central protuberance. In the 70S ribosome it contacts protein S13 of the 30S subunit (bridge B1b), connecting the 2 subunits; this bridge is implicated in subunit movement. Contacts the P site tRNA; the 5S rRNA and some of its associated proteins might help stabilize positioning of ribosome-bound tRNAs. This Pseudomonas paraeruginosa (strain DSM 24068 / PA7) (Pseudomonas aeruginosa (strain PA7)) protein is Large ribosomal subunit protein uL5.